Reading from the N-terminus, the 198-residue chain is ATP-dependent Clp protease proteolytic subunit (198 aa).

Residue Ser98 is the Nucleophile of the active site. His123 is a catalytic residue.

Belongs to the peptidase S14 family. As to quaternary structure, fourteen ClpP subunits assemble into 2 heptameric rings which stack back to back to give a disk-like structure with a central cavity, resembling the structure of eukaryotic proteasomes.

It localises to the cytoplasm. It carries out the reaction Hydrolysis of proteins to small peptides in the presence of ATP and magnesium. alpha-casein is the usual test substrate. In the absence of ATP, only oligopeptides shorter than five residues are hydrolyzed (such as succinyl-Leu-Tyr-|-NHMec, and Leu-Tyr-Leu-|-Tyr-Trp, in which cleavage of the -Tyr-|-Leu- and -Tyr-|-Trp bonds also occurs).. Cleaves peptides in various proteins in a process that requires ATP hydrolysis. Has a chymotrypsin-like activity. Plays a major role in the degradation of misfolded proteins. The chain is ATP-dependent Clp protease proteolytic subunit from Bacillus pumilus (strain SAFR-032).